The chain runs to 445 residues: 6-phosphogluconate dehydrogenase, decarboxylating (445 aa).

NADP(+) contacts are provided by residues A1 to G4, N22 to S24, V63 to A65, and N91. Substrate is bound by residues N91 and S117–G119. The active-site Proton acceptor is K172. H175–N176 contacts substrate. E179 acts as the Proton donor in catalysis. Substrate-binding residues include Y180, K249, R276, R434, and H440.

The protein belongs to the 6-phosphogluconate dehydrogenase family. Homodimer.

It carries out the reaction 6-phospho-D-gluconate + NADP(+) = D-ribulose 5-phosphate + CO2 + NADPH. The protein operates within carbohydrate degradation; pentose phosphate pathway; D-ribulose 5-phosphate from D-glucose 6-phosphate (oxidative stage): step 3/3. Catalyzes the oxidative decarboxylation of 6-phosphogluconate to ribulose 5-phosphate and CO(2), with concomitant reduction of NADP to NADPH. This Raoultella planticola (Klebsiella planticola) protein is 6-phosphogluconate dehydrogenase, decarboxylating (gnd).